A 209-amino-acid polypeptide reads, in one-letter code: MLINIEGIQAFCQTIRNPRRIIPHATFPTFSQIPCNINYFLEQKFQVPVDIRALVLDKDNCITLPNETTIAEAELKKIREFQNIYGEKNVILLSNSIGTRKLDPTGELAAHFQQKWNIPVVRHSKLKPLCTEELYTYLSNNSHVSSASQILFIGDRLLTDITLANIMGSWGVWLTRGVGNTTNMMMEVESWLYKRIHTQNPYIPTNRKS.

The Phosphoryl acceptor motif lies at 57 to 61 (DKDNC).

The protein belongs to the GEP4 family.

Its subcellular location is the mitochondrion inner membrane. The enzyme catalyses a 1,2-diacyl-sn-glycero-3-phospho-(1'-sn-glycero-3'-phosphate) + H2O = a 1,2-diacyl-sn-glycero-3-phospho-(1'-sn-glycerol) + phosphate. The protein operates within phospholipid metabolism; phosphatidylglycerol biosynthesis; phosphatidylglycerol from CDP-diacylglycerol: step 2/2. Its function is as follows. Phosphatidylglycerophosphatase involved in the biosynthesis of cardiolipin (CL), a unique dimeric phosphoglycerolipid predominantly present in mitochondrial membranes and which has important functions for cellular energy metabolism, mitochondrial dynamics and the initiation of apoptotic pathways. This Schizosaccharomyces pombe (strain 972 / ATCC 24843) (Fission yeast) protein is Probable phosphatidylglycerophosphatase, mitochondrial (gep4).